A 379-amino-acid chain; its full sequence is Flap endonuclease 1 (379 aa).

An N-domain region spans residues 1–105 (MGVKGLNQLI…GELEKRLLRR (105 aa)). Asp34 provides a ligand contact to Mg(2+). DNA is bound by residues Arg47 and Arg71. Positions 87, 159, 161, 180, and 182 each coordinate Mg(2+). Positions 123-254 (DMVRYEKRTV…VTAFKLIKEH (132 aa)) are I-domain. Glu159 is a binding site for DNA. The DNA site is built by Gly232 and Asp234. Asp234 lines the Mg(2+) pocket. The interval 341–349 (VQGRLDGFF) is interaction with PCNA. Residues 344–379 (RLDGFFQSVPKPKDSADKKRKNDTKSAKSKKAKTRK) are disordered. Basic residues predominate over residues 361 to 379 (KKRKNDTKSAKSKKAKTRK).

The protein belongs to the XPG/RAD2 endonuclease family. FEN1 subfamily. As to quaternary structure, interacts with PCNA. Three molecules of FEN1 bind to one PCNA trimer with each molecule binding to one PCNA monomer. PCNA stimulates the nuclease activity without altering cleavage specificity. It depends on Mg(2+) as a cofactor. Phosphorylated. Phosphorylation upon DNA damage induces relocalization to the nuclear plasma.

It localises to the nucleus. The protein localises to the nucleolus. Its subcellular location is the nucleoplasm. It is found in the mitochondrion. In terms of biological role, structure-specific nuclease with 5'-flap endonuclease and 5'-3' exonuclease activities involved in DNA replication and repair. During DNA replication, cleaves the 5'-overhanging flap structure that is generated by displacement synthesis when DNA polymerase encounters the 5'-end of a downstream Okazaki fragment. It enters the flap from the 5'-end and then tracks to cleave the flap base, leaving a nick for ligation. Also involved in the long patch base excision repair (LP-BER) pathway, by cleaving within the apurinic/apyrimidinic (AP) site-terminated flap. Acts as a genome stabilization factor that prevents flaps from equilibrating into structures that lead to duplications and deletions. Also possesses 5'-3' exonuclease activity on nicked or gapped double-stranded DNA, and exhibits RNase H activity. Also involved in replication and repair of rDNA and in repairing mitochondrial DNA. This chain is Flap endonuclease 1, found in Debaryomyces hansenii (strain ATCC 36239 / CBS 767 / BCRC 21394 / JCM 1990 / NBRC 0083 / IGC 2968) (Yeast).